A 282-amino-acid chain; its full sequence is Tumor necrosis factor ligand superfamily member 6 (282 aa).

The Cytoplasmic portion of the chain corresponds to 1–82; that stretch reads MQQPFNYPYP…KKKRDHNAGL (82 aa). Positions 30 to 73 are disordered; it reads FPCPASVPGRPGQRRPPPPPPPPPPPPTLLPSRPLPPLPPPSLK. Residues 43–71 are compositionally biased toward pro residues; that stretch reads RRPPPPPPPPPPPPTLLPSRPLPPLPPPS. A helical; Signal-anchor for type II membrane protein transmembrane segment spans residues 83-103; it reads CLLVMFFMVLVALVGLGLGMF. Residues 104 to 282 lie on the Extracellular side of the membrane; the sequence is QLFHLQKELT…SKTFFGLYKL (179 aa). A compositionally biased stretch (basic and acidic residues) spans 119–132; it reads ASQRHTESSLEKQI. The disordered stretch occupies residues 119–140; that stretch reads ASQRHTESSLEKQIGHPNLPSE. The 137-residue stretch at 146 to 282 folds into the THD domain; it reads KVAHLTGKPN…SKTFFGLYKL (137 aa). N-linked (GlcNAc...) asparagine glycosylation is present at N185. Cysteines 203 and 234 form a disulfide. 2 N-linked (GlcNAc...) asparagine glycosylation sites follow: N251 and N261.

This sequence belongs to the tumor necrosis factor family. Homotrimer. Interacts with ARHGAP9, BAIAP2L1, BTK, CACNB3, CACNB4, CRK, DLG2, DNMBP, DOCK4, EPS8L3, FGR, FYB1, FYN, HCK, ITK, ITSN2, KALRN, LYN, MACC1, MIA, MPP4, MYO15A, NCF1, NCK1, NCK2, NCKIPSD, OSTF1, PIK3R1, PSTPIP1, RIMBP3C, SAMSN1, SH3GL3, SH3PXD2B, SH3PXD2A, SH3RF2, SKAP2, SNX33, SNX9, SORBS3, SPTA1, SRC, SRGAP1, SRGAP2, SRGAP3, TEC, TJP3 and YES1. The soluble form derives from the membrane form by proteolytic processing. The membrane-bound form undergoes two successive intramembrane proteolytic cleavages. The first one is processed by ADAM10 producing an N-terminal fragment, which lacks the receptor-binding extracellular domain. This ADAM10-processed FasL (FasL APL) remnant form is still membrane anchored and further processed by SPPL2A that liberates the FasL intracellular domain (FasL ICD). FasL shedding by ADAM10 is a prerequisite for subsequent intramembrane cleavage by SPPL2A in T-cells. Post-translationally, phosphorylated by FGR on tyrosine residues; this is required for ubiquitination and subsequent internalization. In terms of processing, N-glycosylated. Glycosylation enhances apoptotic activity. Monoubiquitinated.

The protein resides in the cell membrane. Its subcellular location is the cytoplasmic vesicle lumen. The protein localises to the lysosome lumen. It localises to the secreted. It is found in the nucleus. In terms of biological role, cytokine that binds to TNFRSF6/FAS, a receptor that transduces the apoptotic signal into cells. Involved in cytotoxic T-cell-mediated apoptosis, natural killer cell-mediated apoptosis and in T-cell development. Initiates fratricidal/suicidal activation-induced cell death (AICD) in antigen-activated T-cells contributing to the termination of immune responses. TNFRSF6/FAS-mediated apoptosis also has a role in the induction of peripheral tolerance. Binds to TNFRSF6B/DcR3, a decoy receptor that blocks apoptosis. Functionally, induces FAS-mediated activation of NF-kappa-B, initiating non-apoptotic signaling pathways. Can induce apoptosis but does not appear to be essential for this process. Cytoplasmic form induces gene transcription inhibition. In Sus scrofa (Pig), this protein is Tumor necrosis factor ligand superfamily member 6 (FASLG).